A 237-amino-acid polypeptide reads, in one-letter code: Putative exosome complex component rrp40 (237 aa).

Residues 67-137 enclose the S1 motif domain; the sequence is EDMVIGTIIE…EPEVVCLSQK (71 aa).

This sequence belongs to the RRP40 family. Component of the RNA exosome complex.

It localises to the cytoplasm. It is found in the nucleus. The protein resides in the nucleolus. In terms of biological role, non-catalytic component of the RNA exosome complex which has 3'-&gt;5' exoribonuclease activity and participates in a multitude of cellular RNA processing and degradation events. The chain is Putative exosome complex component rrp40 (exosc3) from Dictyostelium discoideum (Social amoeba).